The primary structure comprises 473 residues: Cysteine--tRNA ligase (473 aa).

A Zn(2+)-binding site is contributed by cysteine 28. Residues 30–40 (MTVYDFCHIGH) carry the 'HIGH' region motif. Residues cysteine 212, histidine 237, and glutamate 241 each contribute to the Zn(2+) site. Residues 277–281 (KMSKS) carry the 'KMSKS' region motif. Lysine 280 lines the ATP pocket.

Belongs to the class-I aminoacyl-tRNA synthetase family. Monomer. The cofactor is Zn(2+).

The protein resides in the cytoplasm. The enzyme catalyses tRNA(Cys) + L-cysteine + ATP = L-cysteinyl-tRNA(Cys) + AMP + diphosphate. The protein is Cysteine--tRNA ligase of Polynucleobacter asymbioticus (strain DSM 18221 / CIP 109841 / QLW-P1DMWA-1) (Polynucleobacter necessarius subsp. asymbioticus).